The chain runs to 395 residues: Protein HIGH CHLOROPHYLL FLUORESCENCE PHENOTYPE 244, chloroplastic (395 aa).

Residues 1-64 constitute a chloroplast transit peptide; it reads MASLRLPAQL…ERSIVVPVTC (64 aa).

It belongs to the NmrA-type oxidoreductase family. In terms of assembly, component of a high molecular weight complex containing OHP1, OHP2 and HCF244, and PSII core proteins D1/D2, HCF136 and HCF173. Interacts with OHP1. Forms a trimeric complex with OHP1 and OHP2 that mutually stabilizes each subunit.

It is found in the plastid. The protein localises to the chloroplast stroma. The protein resides in the chloroplast thylakoid membrane. Auxiliary factor required, together with HCF173, for the biogenesis of photosystem II (PSII), especially for the synthesis of the reaction center proteins (e.g. D1), via the regulation of the corresponding mRNA (e.g. psbA) translation initiation (ribosomal loading) and stabilization. Forms a trimeric complex with OHP1 and OHP2 that is required to promote PSII core subunit assembly. The trimeric complex forms a transient PSII reaction center-like complex with PsbA, PsbD, PsbE, PsbF and PsbI subunits in thylakoids for early assembly of PSII as well as PSII repair. The trimeric complex is required for the recruitment of ribosomes to the psbA mRNA during PSII biogenesis and repair. In Arabidopsis thaliana (Mouse-ear cress), this protein is Protein HIGH CHLOROPHYLL FLUORESCENCE PHENOTYPE 244, chloroplastic.